The sequence spans 307 residues: Protease HtpX homolog (307 aa).

The next 2 helical transmembrane spans lie at Ala7 to Ala27 and Ser28 to Ser48. His130 contributes to the Zn(2+) binding site. The active site involves Glu131. His134 serves as a coordination point for Zn(2+). The next 2 helical transmembrane spans lie at Ile145–Gly165 and Gly171–Val191. Glu200 contacts Zn(2+). Residues Ala277–Gly307 are disordered.

It belongs to the peptidase M48B family. The cofactor is Zn(2+).

It localises to the cell inner membrane. In Nitrobacter winogradskyi (strain ATCC 25391 / DSM 10237 / CIP 104748 / NCIMB 11846 / Nb-255), this protein is Protease HtpX homolog.